The following is a 540-amino-acid chain: Ecdysone 20-monooxygenase (540 aa).

C488 contributes to the heme binding site.

This sequence belongs to the cytochrome P450 family. Heme is required as a cofactor. Strong expression by embryonic stage 10 in epidermis, decreases significantly in older embryos. Third instar larvae show expression in the midgut copper cells, Malpighian tubules and fat body. In the adult ovaries, expression is seen in both nurse cells and centripetally migrating follicle cells.

It is found in the mitochondrion membrane. The catalysed reaction is ecdysone + AH2 + O2 = 20-hydroxyecdysone + A + H2O. Its pathway is steroid biosynthesis; ecdysteroid biosynthesis. In terms of biological role, required for CNS development; midline glial cells. Involved in the metabolism of insect hormones; responsible for all ecdysone 20-monooxygenase activity during embryonic, larval and adult stages. May be involved in the breakdown of synthetic insecticides. This chain is Ecdysone 20-monooxygenase (shd), found in Drosophila melanogaster (Fruit fly).